The sequence spans 286 residues: UDP-3-O-acyl-N-acetylglucosamine deacetylase (286 aa).

Zn(2+)-binding residues include His79, His237, and Asp241. Residue His264 is the Proton donor of the active site.

The protein belongs to the LpxC family. The cofactor is Zn(2+).

It catalyses the reaction a UDP-3-O-[(3R)-3-hydroxyacyl]-N-acetyl-alpha-D-glucosamine + H2O = a UDP-3-O-[(3R)-3-hydroxyacyl]-alpha-D-glucosamine + acetate. It functions in the pathway glycolipid biosynthesis; lipid IV(A) biosynthesis; lipid IV(A) from (3R)-3-hydroxytetradecanoyl-[acyl-carrier-protein] and UDP-N-acetyl-alpha-D-glucosamine: step 2/6. In terms of biological role, catalyzes the hydrolysis of UDP-3-O-myristoyl-N-acetylglucosamine to form UDP-3-O-myristoylglucosamine and acetate, the committed step in lipid A biosynthesis. The sequence is that of UDP-3-O-acyl-N-acetylglucosamine deacetylase from Chlamydia trachomatis serovar A (strain ATCC VR-571B / DSM 19440 / HAR-13).